The primary structure comprises 269 residues: Chymotrypsin-like elastase family member 2A (269 aa).

The signal sequence occupies residues 1-16 (MIRTLLLSTLVAGALS). A propeptide spans 17 to 28 (CGDPTYPPYVTR) (activation peptide). Residues 29–267 (VVGGEEARPN…YIDWINSVIA (239 aa)) form the Peptidase S1 domain. Residues Cys58 and Cys74 are joined by a disulfide bond. Active-site charge relay system residues include His73 and Asp121. Intrachain disulfides connect Cys155/Cys222, Cys186/Cys202, and Cys212/Cys243. Ser216 (charge relay system) is an active-site residue.

The protein belongs to the peptidase S1 family. Elastase subfamily. As to quaternary structure, interacts with CPA1. Interacts with SERPINA1. As to expression, expressed in pancreas. Not detected in keratinocytes. Detected in exocrine secretions of the pancreas (at protein level). Also expressed in a small fraction of cells in pancreatic islets, adrenal cortex, intestinal glands and colonic lymphoid follicles (at protein level). Detected in plasma.

The protein localises to the secreted. It carries out the reaction Preferential cleavage: Leu-|-Xaa, Met-|-Xaa and Phe-|-Xaa. Hydrolyzes elastin.. Elastase that enhances insulin signaling and might have a physiologic role in cellular glucose metabolism. Circulates in plasma and reduces platelet hyperactivation, triggers both insulin secretion and degradation, and increases insulin sensitivity. In Homo sapiens (Human), this protein is Chymotrypsin-like elastase family member 2A.